The following is a 171-amino-acid chain: Lipoprotein signal peptidase (171 aa).

A run of 3 helical transmembrane segments spans residues 8–28, 64–84, and 99–119; these read SFLW…YIVV, WQQY…VYFL, and ALII…GFVV. Active-site residues include D120 and D138. A helical transmembrane segment spans residues 133 to 153; the sequence is VFNIADIAICIGAGLLVLDAF.

This sequence belongs to the peptidase A8 family.

It localises to the cell inner membrane. It catalyses the reaction Release of signal peptides from bacterial membrane prolipoproteins. Hydrolyzes -Xaa-Yaa-Zaa-|-(S,diacylglyceryl)Cys-, in which Xaa is hydrophobic (preferably Leu), and Yaa (Ala or Ser) and Zaa (Gly or Ala) have small, neutral side chains.. It functions in the pathway protein modification; lipoprotein biosynthesis (signal peptide cleavage). Functionally, this protein specifically catalyzes the removal of signal peptides from prolipoproteins. The polypeptide is Lipoprotein signal peptidase (Haemophilus influenzae (strain ATCC 51907 / DSM 11121 / KW20 / Rd)).